Consider the following 845-residue polypeptide: Cadherin-related family member 5 (845 aa).

An N-terminal signal peptide occupies residues 1 to 25 (MGSWALLWPPLLFTGLLVRPPGTMA). Residues 26–669 (QAQYCSVNKD…DKRFSVVDMA (644 aa)) are Extracellular-facing. N-linked (GlcNAc...) asparagine glycosylation is found at Asn-44, Asn-81, Asn-140, Asn-198, Asn-297, Asn-308, and Asn-405. Cadherin domains are found at residues 71–124 (FRIQ…APEF), 125–237 (PFKT…PPWF), 249–354 (IQAQ…PPRF), and 355–459 (PQRL…PPST). The disordered stretch occupies residues 452 to 661 (SEQEPPSTDV…SSGGGPSEDK (210 aa)). The span at 506–518 (SGTTLRPPTSSTP) shows a compositional bias: low complexity. N-linked (GlcNAc...) asparagine glycosylation is present at Asn-526. Polar residues-rich tracts occupy residues 539-549 (TAQTPKPGTSQ), 556-594 (GTSTSHQPATPSGGTAQTPEPGTSQPMPPSMGTSTSHQP), and 602-611 (AQTPEAGTSQ). 3 consecutive repeat copies span residues 540–570 (AQTPKPGTSQPMPPGVGTSTSHQPATPSGGT), 571–601 (AQTPEPGTSQPMPPSMGTSTSHQPATPGGGT), and 602–631 (AQTPEAGTSQPMPPGMGTSTSHQPTTPGGG). A 4 X 31 AA approximate tandem repeats region spans residues 540 to 645 (AQTPKPGTSQ…PEPGTSQPMP (106 aa)). The stretch at 632-645 (TAQTPEPGTSQPMP) is one 4; truncated repeat. The span at 633–652 (AQTPEPGTSQPMPLSKSTPS) shows a compositional bias: low complexity. Residues 670 to 690 (ALGGVLGALLLLALLGLAVLV) form a helical membrane-spanning segment. Residues 691-845 (HKHYGPRLKC…DAPGGDDSYI (155 aa)) are Cytoplasmic-facing. A mediates interaction with USH1C and MYO7B and is required for proper localization to microvilli tips and function in microvilli organization region spans residues 691–845 (HKHYGPRLKC…DAPGGDDSYI (155 aa)). Residues 724–789 (ANWAPVPSPT…KERRPEGGYK (66 aa)) are disordered. The segment covering 729-762 (VPSPTHDPKPAEAPMPAEPAPPGPASPGGAPEPP) has biased composition (pro residues). The residue at position 770 (Ser-770) is a Phosphoserine. Thr-810 bears the Phosphothreonine mark. The segment at 811-845 (LDVDGASDSGSGDEGEGAGRGGGPYDAPGGDDSYI) is disordered. Ser-817, Ser-819, and Ser-821 each carry phosphoserine. Over residues 835–845 (YDAPGGDDSYI) the composition is skewed to low complexity.

In terms of assembly, part of the IMAC/intermicrovillar adhesion complex/intermicrovillar tip-link complex composed of ANKS4B, MYO7B, USH1C, CDHR2 and CDHR5. Interacts (via cytoplasmic domain) with USH1C and MYO7B; required for proper localization of CDHR5 to microvilli tips and its function in brush border differentiation. N- and O-glycosylated. As to expression, highest expression in kidney, liver, colon and small intestine. In kidney, expressed apically along brush border of proximal convoluted tubule but not in cortical collecting ducts. Isoform 1 is expressed primarily in adult small intestine and colon. Isoform 2 is highly expressed in fetal liver. Expressed in duodenum with higher expression in enterocytes along the villus axis and lower expression in crypts (at protein level).

Its subcellular location is the apical cell membrane. It is found in the cell projection. The protein localises to the microvillus membrane. Functionally, intermicrovillar adhesion molecule that forms, via its extracellular domain, calcium-dependent heterophilic complexes with CDHR2 on adjacent microvilli. Thereby, controls the packing of microvilli at the apical membrane of epithelial cells. Through its cytoplasmic domain, interacts with microvillus cytoplasmic proteins to form the intermicrovillar adhesion complex/IMAC. This complex plays a central role in microvilli and epithelial brush border differentiation. The chain is Cadherin-related family member 5 from Homo sapiens (Human).